The chain runs to 244 residues: Putative ABC transporter ATP-binding protein gll0289 (244 aa).

The ABC transporter domain occupies Leu5 to Glu237. Gly38–Ser45 serves as a coordination point for ATP.

This sequence belongs to the ABC transporter superfamily.

It localises to the cell inner membrane. Probably part of an ABC transporter complex. Responsible for energy coupling to the transport system. This is Putative ABC transporter ATP-binding protein gll0289 from Gloeobacter violaceus (strain ATCC 29082 / PCC 7421).